We begin with the raw amino-acid sequence, 432 residues long: UDP-N-acetylmuramate--L-alanine ligase (432 aa).

108–114 (GAHGKTS) is an ATP binding site.

It belongs to the MurCDEF family.

It localises to the cytoplasm. It catalyses the reaction UDP-N-acetyl-alpha-D-muramate + L-alanine + ATP = UDP-N-acetyl-alpha-D-muramoyl-L-alanine + ADP + phosphate + H(+). The protein operates within cell wall biogenesis; peptidoglycan biosynthesis. Functionally, cell wall formation. The polypeptide is UDP-N-acetylmuramate--L-alanine ligase (Bacillus velezensis (strain DSM 23117 / BGSC 10A6 / LMG 26770 / FZB42) (Bacillus amyloliquefaciens subsp. plantarum)).